We begin with the raw amino-acid sequence, 246 residues long: tRNA (guanine-N(7)-)-methyltransferase (246 aa).

The tract at residues 1–23 (MIESSSPTPPALHEGAPADVSHP) is disordered. Residues E75, E100, D127, and D150 each contribute to the S-adenosyl-L-methionine site. The active site involves D150. Position 154 (K154) interacts with substrate. Positions 156 to 161 (KHNKRR) are interaction with RNA. Residues D186 and 225 to 228 (TKFE) contribute to the substrate site.

Belongs to the class I-like SAM-binding methyltransferase superfamily. TrmB family.

The enzyme catalyses guanosine(46) in tRNA + S-adenosyl-L-methionine = N(7)-methylguanosine(46) in tRNA + S-adenosyl-L-homocysteine. It functions in the pathway tRNA modification; N(7)-methylguanine-tRNA biosynthesis. Functionally, catalyzes the formation of N(7)-methylguanine at position 46 (m7G46) in tRNA. The protein is tRNA (guanine-N(7)-)-methyltransferase of Polaromonas naphthalenivorans (strain CJ2).